Consider the following 530-residue polypeptide: Cytochrome P450 monooxygenase sttB (530 aa).

N-linked (GlcNAc...) asparagine glycosylation is present at asparagine 5. The chain crosses the membrane as a helical span at residues 24–44 (LPILTVALLTGIASAVYINVS). An N-linked (GlcNAc...) asparagine glycan is attached at asparagine 230.

This sequence belongs to the cytochrome P450 family. Heme is required as a cofactor.

It localises to the membrane. The catalysed reaction is preaspterpenacid acid I + reduced [NADPH--hemoprotein reductase] + O2 = preaspterpenacid acid II + oxidized [NADPH--hemoprotein reductase] + H2O + H(+). It participates in secondary metabolite biosynthesis; terpenoid biosynthesis. Cytochrome P450 monooxygenase; part of the gene cluster that mediates the biosynthesis of aspterpenacids. Performs the C22-oxidative modification of the terpene synthase sttA product preaspterpenacid I to produce preaspterpenacid II. It has still to be determined how preaspterpenacid II is further modified to produce aspterpenacids. The protein is Cytochrome P450 monooxygenase sttB of Aspergillus terreus (strain NIH 2624 / FGSC A1156).